Consider the following 380-residue polypeptide: 3-methylitaconate isomerase (380 aa).

This sequence belongs to the PrpF family. As to quaternary structure, homotetramer.

It carries out the reaction 2-methylene-3-methylsuccinate = dimethylmaleate. Its pathway is cofactor degradation; nicotinate degradation; propanoate and pyruvate from 6-hydroxynicotinate: step 6/8. Inhibited by oxidized glutathione, p-chloromercuriphenylsulfonic acid and iodoacetic acid. Not inhibited by the chelating agent alpha,alpha-dipyridyl. Activity is slightly increased by EDTA. Not activated by Fe(2+), Mg(2+), Mn(2+) or Ca(2+). Unaffected by K(+), Na(+), NH4(+), Rb(+) or Li(+). Its function is as follows. Catalyzes the reversible isomerization of (R)-3-methylitaconate to 2,3-dimethylmaleate. Has very low isomerase activity with itaconate. The protein is 3-methylitaconate isomerase (mii) of Eubacterium barkeri (Clostridium barkeri).